The sequence spans 478 residues: Spindle defective protein 3 (478 aa).

The Cytoplasmic portion of the chain corresponds to 1-24 (MDQMTVEEKILEHQELEDGSSSFR). The helical transmembrane segment at 25 to 45 (WLVSSTVIAIGGATVALYISG) threads the bilayer. Topologically, residues 46–52 (KIDWKIP) are extracellular. The chain crosses the membrane as a helical span at residues 53-73 (AIEAGLALTAGGTITCGYLWF). Residues 74 to 478 (KKRVKTVRKL…LRRVDDDIIE (405 aa)) are Cytoplasmic-facing.

The protein resides in the mitochondrion. The protein localises to the mitochondrion outer membrane. Functionally, in the first mitotic division in embryos, required for mitotic spindle alignment and asymmetric cell division. Required for motor-driven chromosome movement and homolog searching within the nucleus, and subsequently ensures homologous chromosome pairing during the prophase stage of meiosis. The chain is Spindle defective protein 3 from Caenorhabditis elegans.